Here is a 127-residue protein sequence, read N- to C-terminus: MDEDTRLSRYLYLTDREHINVDSIKQLCKISDPNACYRCGCTALHEYFYNYRSVNGKYKYRYNGYYQYYSSSDYENYNEYYYDDYDRTGMNSESDSESDNISIKTEYENEYEFYDETQDQSTQHNDL.

The disordered stretch occupies residues 86 to 127 (DRTGMNSESDSESDNISIKTEYENEYEFYDETQDQSTQHNDL). Acidic residues predominate over residues 108–118 (ENEYEFYDETQ).

The polypeptide is Protein B20 (Homo sapiens (Human)).